Reading from the N-terminus, the 566-residue chain is MKISKEKYASMYGPTTGDRFRLADTTLIAKIEKDYTIYGEESKFGGGKTVRDGMAQSPTAVDVADLIITNAIIIDYTGIYKADIGIKDGKILAIGKSGNPNLCDGITEGLEIGANTEILSAEGKIITAGGIDTHIHFISPGQINEALSSGVTTMIGGGTGPNTGTNATTCTPGEWNISKMIQSVDDLPLNFGFMGKGNSSSYEALKVQIEAGAMGLKLHEDWGSTPNAIDTCLSVADDFDVQVAIHTDTLNESGFVEATVGAFKNRTIHTFHSEGAGGGHAPDIMKVAGLSNVLPSSTNPTLPYTKNTIEEHLDMLMVCHHLSPKIPEDVSFAESRIRGKTIAAEDVLHDLGAISITSSDSQAMGRVGEVIIRTWQVAHSMKQQRGTLEGDDEKSDNNRIKRYIAKYTINPAIACGIDEYVGSVEVGKMADLVLWNRAFFGVKPEIIIKGGFIALAMMGDSNASIPTPEPNMYRLMFGSLGRASGATSVIFTSKVASSNLKDKLGISKNVLPVKNTRNIGKANMKLNDFIGDIEIDSETYDVKINGEPIESNYVEKVPMARRYFMF.

The 438-residue stretch at 129 to 566 folds into the Urease domain; the sequence is GGIDTHIHFI…VPMARRYFMF (438 aa). 3 residues coordinate Ni(2+): histidine 134, histidine 136, and lysine 217. The residue at position 217 (lysine 217) is an N6-carboxylysine. Histidine 219 contributes to the substrate binding site. 2 residues coordinate Ni(2+): histidine 246 and histidine 272. Residue histidine 320 is the Proton donor of the active site. Aspartate 360 contacts Ni(2+).

It belongs to the metallo-dependent hydrolases superfamily. Urease alpha subunit family. As to quaternary structure, heterohexamer of 3 UreA (alpha) and 3 UreB (beta) subunits. Ni cation is required as a cofactor. Carboxylation allows a single lysine to coordinate two nickel ions.

The protein localises to the cytoplasm. The catalysed reaction is urea + 2 H2O + H(+) = hydrogencarbonate + 2 NH4(+). It functions in the pathway nitrogen metabolism; urea degradation; CO(2) and NH(3) from urea (urease route): step 1/1. The sequence is that of Urease subunit beta from Aliarcobacter butzleri (strain RM4018) (Arcobacter butzleri).